Here is a 212-residue protein sequence, read N- to C-terminus: NEDD4 family-interacting protein 1 (212 aa).

Residues 1–14 show a composition bias toward polar residues; it reads MSEQSSSSRYQQLQ. The disordered stretch occupies residues 1–40; the sequence is MSEQSSSSRYQQLQNEEEPGENAQASADAPPPYSSIAGES. The Cytoplasmic segment spans residues 1–107; sequence MSEQSSSSRY…ADQLRIGNDG (107 aa). 2 short sequence motifs (PPxY motif) span residues 30 to 33 and 55 to 58; these read PPPY and PPSY. Residues 108 to 128 form a helical membrane-spanning segment; sequence IFMLTFFMAFLFNWIGFFLSF. The Extracellular segment spans residues 129-134; the sequence is CLTSSA. Residues 135-155 traverse the membrane as a helical segment; it reads AGRYGAISGFGLSLIKWILIV. Topologically, residues 156–163 are cytoplasmic; the sequence is RFSTYFPG. A helical transmembrane segment spans residues 164 to 184; that stretch reads YFDGQYWLWWVFLVLGFLLFL. The Extracellular portion of the chain corresponds to 185 to 212; it reads RGFINYAKVRKMPDNFSTLPRTRVLFIY.

It is found in the golgi apparatus membrane. May play a role in Golgi structure maintenance. In Xenopus laevis (African clawed frog), this protein is NEDD4 family-interacting protein 1 (ndfip1).